A 953-amino-acid chain; its full sequence is Catenin alpha-2 (953 aa).

Thr-632 is modified (phosphothreonine). Ser-640, Ser-651, and Ser-901 each carry phosphoserine. Residues 912 to 927 are compositionally biased toward basic and acidic residues; it reads EKKPLVKREKPEEFQT. The segment at 912–939 is disordered; it reads EKKPLVKREKPEEFQTRVRRGSQKKHIS. Residues 928–938 are compositionally biased toward basic residues; sequence RVRRGSQKKHI. A Phosphoserine modification is found at Ser-939.

This sequence belongs to the vinculin/alpha-catenin family. In terms of assembly, interacts with CDH1 and CDH2. Interacts with ZNF639; recruits CTNNA2 to the nucleus. Interacts with F-actin. Expressed in neural tissues, with strongest expression in fetal and adult brain. Expressed in the developing cortical plate and marginal zone of 20-week-old human fetal brain.

The protein resides in the cell membrane. It localises to the cytoplasm. Its subcellular location is the cytoskeleton. It is found in the cell junction. The protein localises to the adherens junction. The protein resides in the cell projection. It localises to the axon. Its subcellular location is the nucleus. Functionally, may function as a linker between cadherin adhesion receptors and the cytoskeleton to regulate cell-cell adhesion and differentiation in the nervous system. Required for proper regulation of cortical neuronal migration and neurite growth. It acts as a negative regulator of Arp2/3 complex activity and Arp2/3-mediated actin polymerization. It thereby suppresses excessive actin branching which would impair neurite growth and stability. Regulates morphological plasticity of synapses and cerebellar and hippocampal lamination during development. Functions in the control of startle modulation. In Homo sapiens (Human), this protein is Catenin alpha-2 (CTNNA2).